Here is a 361-residue protein sequence, read N- to C-terminus: Small ribosomal subunit protein mS46 (361 aa).

A mitochondrion-targeting transit peptide spans 1-14 (MRSSMFRCVSRAHY). The tract at residues 37-99 (ASSNALKLDK…SDSVRANKQQ (63 aa)) is disordered. Positions 43-52 (KLDKMKEGRM) are enriched in basic and acidic residues. Over residues 59 to 68 (GNQNRNSMNN) the composition is skewed to low complexity. A compositionally biased stretch (basic and acidic residues) spans 69–91 (KESRGREGNQGERNMRLKNRSSD).

It belongs to the mitochondrion-specific ribosomal protein mS46 family. As to quaternary structure, component of the mitochondrial small ribosomal subunit (mt-SSU). Mature yeast 74S mitochondrial ribosomes consist of a small (37S) and a large (54S) subunit. The 37S small subunit contains a 15S ribosomal RNA (15S mt-rRNA) and 34 different proteins. The 54S large subunit contains a 21S rRNA (21S mt-rRNA) and 46 different proteins.

It localises to the mitochondrion. Its function is as follows. Component of the mitochondrial ribosome (mitoribosome), a dedicated translation machinery responsible for the synthesis of mitochondrial genome-encoded proteins, including at least some of the essential transmembrane subunits of the mitochondrial respiratory chain. The mitoribosomes are attached to the mitochondrial inner membrane and translation products are cotranslationally integrated into the membrane. The protein is Small ribosomal subunit protein mS46 (RSM28) of Saccharomyces cerevisiae (strain ATCC 204508 / S288c) (Baker's yeast).